Here is a 191-residue protein sequence, read N- to C-terminus: Protein HP-20 homolog (191 aa).

The N-terminal stretch at 1 to 16 is a signal peptide; it reads MADLRILVSIILMTNA. A Collagen-like domain is found at 22-58; it reads GCTGPPGPPGHPGPPGIRGPPGIRGIPGLPGPPGTPG. Residues 22–61 form a disordered region; the sequence is GCTGPPGPPGHPGPPGIRGPPGIRGIPGLPGPPGTPGPSV. A compositionally biased stretch (pro residues) spans 26–39; that stretch reads PPGPPGHPGPPGIR. In terms of domain architecture, C1q spans 64–191; the sequence is PCHRQSAFTV…VTIYFSGFLT (128 aa).

The protein localises to the secreted. In Bos taurus (Bovine), this protein is Protein HP-20 homolog.